The chain runs to 99 residues: A-type ATP synthase subunit F (99 aa).

It belongs to the V-ATPase F subunit family. Has multiple subunits with at least A(3), B(3), C, D, E, F, H, I and proteolipid K(x).

Its subcellular location is the cell membrane. Its function is as follows. Component of the A-type ATP synthase that produces ATP from ADP in the presence of a proton gradient across the membrane. This chain is A-type ATP synthase subunit F, found in Methanococcoides burtonii (strain DSM 6242 / NBRC 107633 / OCM 468 / ACE-M).